Reading from the N-terminus, the 1523-residue chain is Rho GTPase-activating protein gacHH (1523 aa).

3 Kelch repeats span residues 30-76, 83-133, and 135-184; these read DIVI…YGHS, KMFV…LIYD, and YILI…DISP. Polar residues-rich tracts occupy residues 161–173 and 184–194; these read NSWTKPSSNSSTG and PRSSTTTPTHQ. Positions 161-256 are disordered; sequence NSWTKPSSNS…GGSPMTTPPT (96 aa). Positions 195 to 211 are enriched in low complexity; it reads SVNGSNSNSSSSSRVRS. The segment covering 212–221 has biased composition (polar residues); the sequence is ATISSHNNSP. Residues 227 to 244 show a composition bias toward low complexity; the sequence is NNNNNNNNNSNNSNNSNN. Kelch repeat units lie at residues 335-384, 386-441, and 443-496; these read KAFI…AIGS, LFIF…PISS, and ILII…PITS. Disordered stretches follow at residues 510-569, 609-631, and 647-671; these read LPHL…DNIN, QSIDRNGGSGGGSGGGNGVVSND, and NKNNNNNNNNNSGGSNLSISSNSGS. Gly residues predominate over residues 615-626; sequence GGSGGGSGGGNG. A coiled-coil region spans residues 690–729; sequence CIKKYNSLKDSYLELKQKYQEEREKRLELEKELERYRLSS. A disordered region spans residues 748–786; it reads NINSNNSTTTTTTTTTTTTTPIPLSTSNNNNNNNNNSTL. Positions 812–840 form a coiled coil; it reads YEKRVKWKENTEKEANQQLEVIKSKIDLF. Disordered stretches follow at residues 861-881, 905-927, 963-991, 1006-1096, and 1143-1194; these read SENINGDHNQQQQQQQQQNPQ, LTPRKSRENSVHHSRSVSNPIPL, TPQKPPQQPQQQQQQQPPQENGKEPSKST, SGHF…RLGK, and NGAN…SERI. The segment covering 870-881 has biased composition (low complexity); that stretch reads QQQQQQQQQNPQ. The span at 905–915 shows a compositional bias: basic and acidic residues; it reads LTPRKSRENSV. 4 stretches are compositionally biased toward low complexity: residues 971 to 981, 1012 to 1030, 1043 to 1079, and 1143 to 1153; these read PQQQQQQQPPQ, SSSNESSNSEETTPTFSNN, QHQQQTNIGSNSISNINTSNSTTSLSSSVSSTSLQTQ, and NGANNLGGLVL. A coiled-coil region spans residues 1151–1228; it reads LVLTSDKEKE…KKHKKIKGLF (78 aa). Residues 1155–1194 show a composition bias toward basic and acidic residues; it reads SDKEKEKLEKEREKSERIEREKQEKEREKLEKEREKSERI. A Rho-GAP domain is found at 1233 to 1411; the sequence is SNKESLPFRR…TFIEDFHYIF (179 aa). The segment at 1425 to 1482 is disordered; sequence DDDYDSSSFGSNNTPSSHSPHSSSPTLNPAVTTTTTTTTTTNTTTTTNTTTTPTSATI. The segment covering 1430-1476 has biased composition (low complexity); sequence SSSFGSNNTPSSHSPHSSSPTLNPAVTTTTTTTTTTNTTTTTNTTTT.

Its subcellular location is the cytoplasm. Functionally, rho GTPase-activating protein involved in the signal transduction pathway. The protein is Rho GTPase-activating protein gacHH (gacHH) of Dictyostelium discoideum (Social amoeba).